A 484-amino-acid chain; its full sequence is MPKKEKKAKTPLSDEEQLLLFQQKLLTEEEMAKKKERLLSQFLKDKLAKEEHNSALNLNKINTQWRTVLREVKTRELHKDIEILSQTFERVVDCKDNVIKSLAKDLSEAEEQYARALRSHLHSVDQLLALQRHRLSLLEESYNMELEALTKEFETERKTIIDQHEKEIHYLQDIFMAMEQNYIDSEYESKLEFQSMWNDLKNMNLEEKHFLRLHLENIVEDLWRKFQDVLKNYTDATEDRKAAFETLQVKDEKSSKEIEVQMKKIQKLQDAITISKGKIMIHSRESEDENRYIRNDKELVLVQLRKLKAQRTQARAASQKNLVKLTLESNATLKALRKIVDKGEKILKLAEICRKFETEEEKVLPFYSSVLTPKEQEGIEENNLEELTEELAKVMVDYTGMENFWKRYNKVKLEQLSLQHRRAQLLDINGKLREMLKQYLDGISVSDEVLSQLNPLFIVNYQSNLPQPLSIPIAHPGDKQHPTT.

Coiled coils occupy residues 92-160 and 374-403; these read VDCK…RKTI and KEQEGIEENNLEELTEELAKVMVDYTGMEN.

This sequence belongs to the DRC2 family. Component of the nexin-dynein regulatory complex (N-DRC). Interacts with DRC1.

It is found in the cytoplasm. Its subcellular location is the cytoskeleton. The protein localises to the flagellum basal body. The protein resides in the cell projection. It localises to the cilium. It is found in the flagellum. Its subcellular location is the flagellum axoneme. In terms of biological role, component of the nexin-dynein regulatory complex (N-DRC), a key regulator of ciliary/flagellar motility which maintains the alignment and integrity of the distal axoneme and regulates microtubule sliding in motile axonemes. Plays a critical role in the assembly of N-DRC and also stabilizes the assembly of multiple inner dynein arms and radial spokes. Coassembles with DRC1 to form a central scaffold needed for assembly of the N-DRC and its attachment to the outer doublet microtubules. This is Dynein regulatory complex subunit 2 (CCDC65) from Macaca fascicularis (Crab-eating macaque).